The primary structure comprises 154 residues: Large ribosomal subunit protein uL13 (154 aa).

Belongs to the universal ribosomal protein uL13 family. In terms of assembly, part of the 50S ribosomal subunit.

This protein is one of the early assembly proteins of the 50S ribosomal subunit, although it is not seen to bind rRNA by itself. It is important during the early stages of 50S assembly. The chain is Large ribosomal subunit protein uL13 from Cereibacter sphaeroides (strain ATCC 17025 / ATH 2.4.3) (Rhodobacter sphaeroides).